Consider the following 179-residue polypeptide: UPF0227 protein VS_2073 (179 aa).

It belongs to the UPF0227 family.

The protein is UPF0227 protein VS_2073 of Vibrio atlanticus (strain LGP32) (Vibrio splendidus (strain Mel32)).